A 188-amino-acid chain; its full sequence is Transmembrane protein 160 (188 aa).

The transit peptide at 1–96 (MGGGWWWARA…ISFMQSDMGR (96 aa)) directs the protein to the mitochondrion. The tract at residues 24 to 52 (PPQRPRSGGARGSFAPGHGPRAGASPPPV) is disordered. At S48 the chain carries Phosphoserine. 2 consecutive transmembrane segments (helical) span residues 102–122 (FFLLGGLCVVWGSASYAVGLA) and 135–155 (AAVGAGAVLAASLLWACAVGL). Residues 168-188 (PEDDGTASAEGPDEAGRPPPE) are disordered.

Belongs to the TMEM160 family.

Its subcellular location is the mitochondrion inner membrane. The polypeptide is Transmembrane protein 160 (Homo sapiens (Human)).